The sequence spans 508 residues: Photosystem II CP47 reaction center protein (508 aa).

6 helical membrane-spanning segments follow: residues 21–36, 101–115, 140–156, 203–218, 237–252, and 457–472; these read SVHI…WAGS, IVFS…IWHW, GIHL…FGAF, IAAG…FHLS, VLSS…AFVV, and SFAL…HGAR.

It belongs to the PsbB/PsbC family. PsbB subfamily. As to quaternary structure, PSII is composed of 1 copy each of membrane proteins PsbA, PsbB, PsbC, PsbD, PsbE, PsbF, PsbH, PsbI, PsbJ, PsbK, PsbL, PsbM, PsbT, PsbX, PsbY, PsbZ, Psb30/Ycf12, at least 3 peripheral proteins of the oxygen-evolving complex and a large number of cofactors. It forms dimeric complexes. It depends on Binds multiple chlorophylls. PSII binds additional chlorophylls, carotenoids and specific lipids. as a cofactor.

It is found in the plastid. Its subcellular location is the chloroplast thylakoid membrane. One of the components of the core complex of photosystem II (PSII). It binds chlorophyll and helps catalyze the primary light-induced photochemical processes of PSII. PSII is a light-driven water:plastoquinone oxidoreductase, using light energy to abstract electrons from H(2)O, generating O(2) and a proton gradient subsequently used for ATP formation. This is Photosystem II CP47 reaction center protein from Barbarea verna (Land cress).